Consider the following 129-residue polypeptide: Small ribosomal subunit protein uS11 (129 aa).

Belongs to the universal ribosomal protein uS11 family. Part of the 30S ribosomal subunit. Interacts with proteins S7 and S18. Binds to IF-3.

Its function is as follows. Located on the platform of the 30S subunit, it bridges several disparate RNA helices of the 16S rRNA. Forms part of the Shine-Dalgarno cleft in the 70S ribosome. The chain is Small ribosomal subunit protein uS11 from Erythrobacter litoralis (strain HTCC2594).